The sequence spans 417 residues: Inner membrane transport protein YnfM (417 aa).

Residues 1 to 22 (MSRTTTVDGAPASDTDKQSISQ) form a disordered region. The Periplasmic portion of the chain corresponds to 1–38 (MSRTTTVDGAPASDTDKQSISQPNQFIKRGTPQFMRVT). A helical membrane pass occupies residues 39 to 59 (LALFSAGLATFALLYCVQPIL). Topologically, residues 60-73 (PVLSQEFGLTPANS) are cytoplasmic. A helical transmembrane segment spans residues 74 to 94 (SISLSISTAMLAIGLLFTGPL). Residues 95–101 (SDAIGRK) are Periplasmic-facing. Residues 102–122 (PVMVTALLLASICTLLSTMMT) form a helical membrane-spanning segment. The Cytoplasmic portion of the chain corresponds to 123 to 125 (SWH). The helical transmembrane segment at 126-146 (GILIMRALIGLSLSGVAAVGM) threads the bilayer. At 147–152 (TYLSEE) the chain is on the periplasmic side. A helical transmembrane segment spans residues 153 to 173 (IHPSFVAFSMGLYISGNSIGG). Over 174 to 190 (MSGRLISGVFTDFFNWR) the chain is Cytoplasmic. Residues 191–211 (IALAAIGCFALASALMFWKIL) form a helical membrane-spanning segment. The Periplasmic portion of the chain corresponds to 212-241 (PESRHFRPTSLRPKTLFINFRLHWRDRGLP). The helical transmembrane segment at 242–262 (LLFAEGFLLMGSFVTLFNYIG) threads the bilayer. Residues 263–264 (YR) lie on the Cytoplasmic side of the membrane. Residues 265 to 285 (LMLSPWHVSQAVVGLLSLAYL) form a helical membrane-spanning segment. Residues 286–315 (TGTWSSPKAGTMTTRYGRGPVMLFSTGVML) lie on the Periplasmic side of the membrane. A helical membrane pass occupies residues 316–336 (FGLLMTLFSSLWLIFAGMLLF). The Cytoplasmic segment spans residues 337-364 (SAGFFAAHSVASSWIGPRAKRAKGQASS). Residues 365-385 (LYLFSYYLGSSIAGTLGGVFW) traverse the membrane as a helical segment. The Periplasmic segment spans residues 386-387 (HN). The helical transmembrane segment at 388–408 (YGWNGVGAFIALMLVIALLVG) threads the bilayer. Residues 409-417 (TRLHRRLHA) lie on the Cytoplasmic side of the membrane.

The protein belongs to the major facilitator superfamily.

It is found in the cell inner membrane. The protein is Inner membrane transport protein YnfM (ynfM) of Escherichia coli (strain K12).